The chain runs to 217 residues: Somatotropin (217 aa).

A signal peptide spans 1–26 (MMAAGPRTSLLLAFALLCLPWTQVVG). Histidine 46 contributes to the Zn(2+) binding site. A disulfide bridge connects residues cysteine 79 and cysteine 190. Serine 132 is modified (phosphoserine). Glutamate 199 lines the Zn(2+) pocket. An intrachain disulfide couples cysteine 207 to cysteine 215.

Belongs to the somatotropin/prolactin family.

Its subcellular location is the secreted. Its function is as follows. Plays an important role in growth control. Its major role in stimulating body growth is to stimulate the liver and other tissues to secrete IGF1. It stimulates both the differentiation and proliferation of myoblasts. It also stimulates amino acid uptake and protein synthesis in muscle and other tissues. The polypeptide is Somatotropin (GH1) (Bos mutus grunniens (Wild yak)).